Here is a 361-residue protein sequence, read N- to C-terminus: tRNA N6-adenosine threonylcarbamoyltransferase (361 aa).

Residues histidine 110 and histidine 114 each contribute to the Fe cation site. Substrate-binding positions include 132-136 (LVSGG), aspartate 165, glycine 178, aspartate 182, and asparagine 289. Aspartate 317 contacts Fe cation.

Belongs to the KAE1 / TsaD family. Requires Fe(2+) as cofactor.

It localises to the cytoplasm. It carries out the reaction L-threonylcarbamoyladenylate + adenosine(37) in tRNA = N(6)-L-threonylcarbamoyladenosine(37) in tRNA + AMP + H(+). Functionally, required for the formation of a threonylcarbamoyl group on adenosine at position 37 (t(6)A37) in tRNAs that read codons beginning with adenine. Is involved in the transfer of the threonylcarbamoyl moiety of threonylcarbamoyl-AMP (TC-AMP) to the N6 group of A37, together with TsaE and TsaB. TsaD likely plays a direct catalytic role in this reaction. The polypeptide is tRNA N6-adenosine threonylcarbamoyltransferase (Nitratidesulfovibrio vulgaris (strain ATCC 29579 / DSM 644 / CCUG 34227 / NCIMB 8303 / VKM B-1760 / Hildenborough) (Desulfovibrio vulgaris)).